Reading from the N-terminus, the 380-residue chain is MAPNIRKSHPLLKMINNSLIDLPTPSNISAWWNFGSLLAMCLATQILTGLLLAMHYTADTTLAFSSVAHTCRNVQYGWLIRNLHANGASFFFICIFLHIGRGLYYGSYLYKETWNTGVVLLLTLMATAFVGYVLPWGQMSFWGATVITNLFSAIPYIGQTLVEWAWGGFSVDNPTLTRFFALHFLLPFMIAGITITHLMFLHESGSNNPLGISSNSDKIPFHPYYSLKDILGLTLMLTPLLTLALFSPNLLGDPENFTPANPLVTPPHIKPEWYFLFAYAILRSIPNKLGGVLALAASVLILLLIPFLHKSKQRTMTFRPLSQTLFWLLVANLLVLTWVGSQPVEHPFIIIGQMASFSYFTILLILFPMTSTLENKMLNH.

4 helical membrane passes run 34–54 (FGSL…LLAM), 78–99 (WLIR…FLHI), 114–134 (WNTG…GYVL), and 179–199 (FFAL…THLM). Residues His-84 and His-98 each contribute to the heme b site. Residues His-183 and His-197 each contribute to the heme b site. His-202 serves as a coordination point for a ubiquinone. 4 helical membrane-spanning segments follow: residues 227 to 247 (LKDI…ALFS), 289 to 309 (LGGV…PFLH), 321 to 341 (LSQT…WVGS), and 348 to 368 (FIII…ILFP).

This sequence belongs to the cytochrome b family. The cytochrome bc1 complex contains 11 subunits: 3 respiratory subunits (MT-CYB, CYC1 and UQCRFS1), 2 core proteins (UQCRC1 and UQCRC2) and 6 low-molecular weight proteins (UQCRH/QCR6, UQCRB/QCR7, UQCRQ/QCR8, UQCR10/QCR9, UQCR11/QCR10 and a cleavage product of UQCRFS1). This cytochrome bc1 complex then forms a dimer. Heme b serves as cofactor.

It localises to the mitochondrion inner membrane. In terms of biological role, component of the ubiquinol-cytochrome c reductase complex (complex III or cytochrome b-c1 complex) that is part of the mitochondrial respiratory chain. The b-c1 complex mediates electron transfer from ubiquinol to cytochrome c. Contributes to the generation of a proton gradient across the mitochondrial membrane that is then used for ATP synthesis. This chain is Cytochrome b (MT-CYB), found in Tragopan satyra (Satyr tragopan).